The sequence spans 333 residues: Holliday junction branch migration complex subunit RuvB (333 aa).

The segment at 4 to 185 is large ATPase domain (RuvB-L); the sequence is IDRLVSTDVL…FGIVQRLEFY (182 aa). Residues Ile-24, Arg-25, Gly-66, Lys-69, Thr-70, Thr-71, 132–134, Arg-175, Tyr-185, and Arg-222 each bind ATP; that span reads EDY. Thr-70 contributes to the Mg(2+) binding site. The small ATPAse domain (RuvB-S) stretch occupies residues 186-256; it reads SVPDLEHIVS…IAIKALEMLN (71 aa). A head domain (RuvB-H) region spans residues 259–333; the sequence is KEGLDYMDSK…HAYQHFICGG (75 aa). 3 residues coordinate DNA: Arg-295, Arg-314, and Arg-319.

The protein belongs to the RuvB family. In terms of assembly, homohexamer. Forms an RuvA(8)-RuvB(12)-Holliday junction (HJ) complex. HJ DNA is sandwiched between 2 RuvA tetramers; dsDNA enters through RuvA and exits via RuvB. An RuvB hexamer assembles on each DNA strand where it exits the tetramer. Each RuvB hexamer is contacted by two RuvA subunits (via domain III) on 2 adjacent RuvB subunits; this complex drives branch migration. In the full resolvosome a probable DNA-RuvA(4)-RuvB(12)-RuvC(2) complex forms which resolves the HJ.

Its subcellular location is the cytoplasm. The catalysed reaction is ATP + H2O = ADP + phosphate + H(+). The RuvA-RuvB-RuvC complex processes Holliday junction (HJ) DNA during genetic recombination and DNA repair, while the RuvA-RuvB complex plays an important role in the rescue of blocked DNA replication forks via replication fork reversal (RFR). RuvA specifically binds to HJ cruciform DNA, conferring on it an open structure. The RuvB hexamer acts as an ATP-dependent pump, pulling dsDNA into and through the RuvAB complex. RuvB forms 2 homohexamers on either side of HJ DNA bound by 1 or 2 RuvA tetramers; 4 subunits per hexamer contact DNA at a time. Coordinated motions by a converter formed by DNA-disengaged RuvB subunits stimulates ATP hydrolysis and nucleotide exchange. Immobilization of the converter enables RuvB to convert the ATP-contained energy into a lever motion, pulling 2 nucleotides of DNA out of the RuvA tetramer per ATP hydrolyzed, thus driving DNA branch migration. The RuvB motors rotate together with the DNA substrate, which together with the progressing nucleotide cycle form the mechanistic basis for DNA recombination by continuous HJ branch migration. Branch migration allows RuvC to scan DNA until it finds its consensus sequence, where it cleaves and resolves cruciform DNA. The sequence is that of Holliday junction branch migration complex subunit RuvB from Hamiltonella defensa subsp. Acyrthosiphon pisum (strain 5AT).